The primary structure comprises 643 residues: Phosphomethylpyrimidine synthase (643 aa).

Residues N248, M277, Y306, H342, 362-364, 403-406, and E442 each bind substrate; these read SRG and DGLR. H446 is a binding site for Zn(2+). Y469 is a substrate binding site. Position 510 (H510) interacts with Zn(2+). 3 residues coordinate [4Fe-4S] cluster: C590, C593, and C598.

Belongs to the ThiC family. As to quaternary structure, homodimer. [4Fe-4S] cluster serves as cofactor.

The enzyme catalyses 5-amino-1-(5-phospho-beta-D-ribosyl)imidazole + S-adenosyl-L-methionine = 4-amino-2-methyl-5-(phosphooxymethyl)pyrimidine + CO + 5'-deoxyadenosine + formate + L-methionine + 3 H(+). It participates in cofactor biosynthesis; thiamine diphosphate biosynthesis. Its function is as follows. Catalyzes the synthesis of the hydroxymethylpyrimidine phosphate (HMP-P) moiety of thiamine from aminoimidazole ribotide (AIR) in a radical S-adenosyl-L-methionine (SAM)-dependent reaction. The protein is Phosphomethylpyrimidine synthase of Burkholderia ambifaria (strain MC40-6).